The chain runs to 667 residues: tRNA uridine 5-carboxymethylaminomethyl modification enzyme MnmG (667 aa).

13 to 18 (GGGHAG) serves as a coordination point for FAD. 280-294 (GPRYCPSVEDKINRF) lines the NAD(+) pocket.

It belongs to the MnmG family. In terms of assembly, homodimer. Heterotetramer of two MnmE and two MnmG subunits. The cofactor is FAD.

The protein localises to the cytoplasm. NAD-binding protein involved in the addition of a carboxymethylaminomethyl (cmnm) group at the wobble position (U34) of certain tRNAs, forming tRNA-cmnm(5)s(2)U34. In Polaromonas naphthalenivorans (strain CJ2), this protein is tRNA uridine 5-carboxymethylaminomethyl modification enzyme MnmG.